Here is a 530-residue protein sequence, read N- to C-terminus: Bifunctional purine biosynthesis protein PurH (530 aa).

The 148-residue stretch at 1–148 (MEQARPIRRA…KNHKDVAIVV (148 aa)) folds into the MGS-like domain.

This sequence belongs to the PurH family.

The catalysed reaction is (6R)-10-formyltetrahydrofolate + 5-amino-1-(5-phospho-beta-D-ribosyl)imidazole-4-carboxamide = 5-formamido-1-(5-phospho-D-ribosyl)imidazole-4-carboxamide + (6S)-5,6,7,8-tetrahydrofolate. The enzyme catalyses IMP + H2O = 5-formamido-1-(5-phospho-D-ribosyl)imidazole-4-carboxamide. It functions in the pathway purine metabolism; IMP biosynthesis via de novo pathway; 5-formamido-1-(5-phospho-D-ribosyl)imidazole-4-carboxamide from 5-amino-1-(5-phospho-D-ribosyl)imidazole-4-carboxamide (10-formyl THF route): step 1/1. It participates in purine metabolism; IMP biosynthesis via de novo pathway; IMP from 5-formamido-1-(5-phospho-D-ribosyl)imidazole-4-carboxamide: step 1/1. This is Bifunctional purine biosynthesis protein PurH from Aeromonas salmonicida (strain A449).